Consider the following 244-residue polypeptide: ATP synthase subunit O, mitochondrial (244 aa).

The transit peptide at 1–45 (MAMTGRARSMGFSILQKALSSAQRSNAHRSILCPTLSNSELLRNY) directs the protein to the mitochondrion.

The protein belongs to the ATPase delta chain family. F-type ATPases have 2 components, CF(1) - the catalytic core - and CF(0) - the membrane proton channel. CF(1) has five subunits: alpha(3), beta(3), gamma(1), delta(1), epsilon(1). CF(0) has three main subunits: a, b and c.

It is found in the mitochondrion. The protein localises to the mitochondrion inner membrane. Its function is as follows. Mitochondrial membrane ATP synthase (F(1)F(0) ATP synthase or Complex V) produces ATP from ADP in the presence of a proton gradient across the membrane which is generated by electron transport complexes of the respiratory chain. F-type ATPases consist of two structural domains, F(1) - containing the extramembraneous catalytic core and F(0) - containing the membrane proton channel, linked together by a central stalk and a peripheral stalk. During catalysis, ATP synthesis in the catalytic domain of F(1) is coupled via a rotary mechanism of the central stalk subunits to proton translocation. Part of the complex F(0) domain and the peripheric stalk, which acts as a stator to hold the catalytic alpha(3)beta(3) subcomplex and subunit a/ATP6 static relative to the rotary elements. In Ipomoea batatas (Sweet potato), this protein is ATP synthase subunit O, mitochondrial.